The chain runs to 825 residues: Probable ATP-dependent RNA helicase DDX20 (825 aa).

Residues P27–P50 are disordered. Positions A63 to L91 match the Q motif motif. ATP contacts are provided by residues R85, Q90, A107–T114, and G110–C115. Residues I94–V265 enclose the Helicase ATP-binding domain. S188 carries the phosphoserine modification. Positions D212–D215 match the DEAD box motif. Residue S270 is modified to Phosphoserine. The 150-residue stretch at H300 to C449 folds into the Helicase C-terminal domain. Composition is skewed to polar residues over residues S465–K475 and F484–A504. 2 disordered regions span residues S465–L573 and Q642–E753. A phosphoserine mark is found at S472, S501, and S506. The segment covering R508–V518 has biased composition (basic residues). Over residues K547–G571 the composition is skewed to polar residues. At T552 the chain carries Phosphothreonine. Phosphoserine is present on residues S561, S653, S655, S657, S673, S678, and S679. The span at S646 to S668 shows a compositional bias: low complexity. A phosphothreonine mark is found at T689 and T706. Over residues E698–E711 the composition is skewed to polar residues. Residues K733–S744 are compositionally biased toward basic residues.

The protein belongs to the DEAD box helicase family. DDX20 subfamily. As to quaternary structure, part of the core SMN complex that contains SMN1, GEMIN2/SIP1, DDX20/GEMIN3, GEMIN4, GEMIN5, GEMIN6, GEMIN7, GEMIN8 and STRAP/UNRIP. Part of the SMN-Sm complex that contains SMN1, GEMIN2/SIP1, DDX20/GEMIN3, GEMIN4, GEMIN5, GEMIN6, GEMIN7, GEMIN8, STRAP/UNRIP and the Sm proteins SNRPB, SNRPD1, SNRPD2, SNRPD3, SNRPE, SNRPF and SNRPG. Interacts with SMN1; the interaction is direct. Interacts with GEMIN4; the interaction is direct. Interacts with GEMIN5. Interacts with SNUPN; the interaction is direct. Interacts with PPP4R2. Interacts with FOXL2. Interacts with NANOS1 and PUM2.

It localises to the cytoplasm. Its subcellular location is the nucleus. The protein resides in the gem. It catalyses the reaction ATP + H2O = ADP + phosphate + H(+). The enzyme catalyses a ribonucleoside 5'-triphosphate + H2O = a ribonucleoside 5'-diphosphate + phosphate + H(+). In terms of biological role, the SMN complex catalyzes the assembly of small nuclear ribonucleoproteins (snRNPs), the building blocks of the spliceosome, and thereby plays an important role in the splicing of cellular pre-mRNAs. Most spliceosomal snRNPs contain a common set of Sm proteins SNRPB, SNRPD1, SNRPD2, SNRPD3, SNRPE, SNRPF and SNRPG that assemble in a heptameric protein ring on the Sm site of the small nuclear RNA to form the core snRNP (Sm core). In the cytosol, the Sm proteins SNRPD1, SNRPD2, SNRPE, SNRPF and SNRPG are trapped in an inactive 6S pICln-Sm complex by the chaperone CLNS1A that controls the assembly of the core snRNP. To assemble core snRNPs, the SMN complex accepts the trapped 5Sm proteins from CLNS1A forming an intermediate. Binding of snRNA inside 5Sm triggers eviction of the SMN complex, thereby allowing binding of SNRPD3 and SNRPB to complete assembly of the core snRNP. May also play a role in the metabolism of small nucleolar ribonucleoprotein (snoRNPs). The polypeptide is Probable ATP-dependent RNA helicase DDX20 (Ddx20) (Mus musculus (Mouse)).